Reading from the N-terminus, the 176-residue chain is Pituitary adenylate cyclase-activating polypeptide (176 aa).

The signal sequence occupies residues 1 to 24; the sequence is MTMCSGARLALLVYGIIMHSSVYS. Positions 25–79 are excised as a propeptide; it reads SPAAAGLRFPGIRPEEEAYGEDGNPLPDFDGSEPPGAGSPASAPRAAAAWYRPAG. The interval 39 to 68 is disordered; sequence EEEAYGEDGNPLPDFDGSEPPGAGSPASAP. Positions 56 to 68 are enriched in low complexity; the sequence is SEPPGAGSPASAP. An important for receptor binding region spans residues 150 to 158; the sequence is VKKYLAAVL. Position 158 is a leucine amide (Leu158). A Lysine amide modification is found at Lys169. Positions 173 to 176 are excised as a propeptide; that stretch reads IAYL.

This sequence belongs to the glucagon family.

The protein resides in the secreted. Functionally, PACAP is a neuropeptide involved in diverse array of physiological processes through activating the PACAP subfamily of class B1 G protein-coupled receptors: VIP receptor 1 (VIPR1), VIP receptor 2 (VIPR2), and PACAP type I receptor (ADCYAP1R1). Exerts neuroprotective and general cytoprotective effects due to anti-apoptotic, anti-inflammatory, and antioxidant actions. Promotes neuron projection development through the RAPGEF2/Rap1/B-Raf/ERK pathway. In chromaffin cells, induces long-lasting increase of intracellular calcium concentrations and neuroendocrine secretion. Involved in the control of glucose homeostasis, induces insulin secretion by pancreatic beta cells. PACAP exists in two bioactive forms from proteolysis of the same precursor protein, PACAP27 and PACAP38, which differ by eleven amino acid residues in the C-terminus. This chain is Pituitary adenylate cyclase-activating polypeptide, found in Homo sapiens (Human).